The following is a 442-amino-acid chain: Histidinol dehydrogenase (442 aa).

Positions 136, 197, and 220 each coordinate NAD(+). Residues serine 243, glutamine 265, and histidine 268 each contribute to the substrate site. Residues glutamine 265 and histidine 268 each coordinate Zn(2+). Catalysis depends on proton acceptor residues glutamate 333 and histidine 334. Substrate contacts are provided by histidine 334, aspartate 367, glutamate 421, and histidine 426. Residue aspartate 367 coordinates Zn(2+). Residue histidine 426 coordinates Zn(2+).

It belongs to the histidinol dehydrogenase family. Requires Zn(2+) as cofactor.

The catalysed reaction is L-histidinol + 2 NAD(+) + H2O = L-histidine + 2 NADH + 3 H(+). It functions in the pathway amino-acid biosynthesis; L-histidine biosynthesis; L-histidine from 5-phospho-alpha-D-ribose 1-diphosphate: step 9/9. Catalyzes the sequential NAD-dependent oxidations of L-histidinol to L-histidinaldehyde and then to L-histidine. The protein is Histidinol dehydrogenase of Pseudomonas fluorescens (strain ATCC BAA-477 / NRRL B-23932 / Pf-5).